The primary structure comprises 1603 residues: Transcription factor Gibbin (1603 aa).

Disordered stretches follow at residues 19–108 (PDYL…SSSR), 150–236 (LRLS…STDY), 264–285 (LEPP…FLDP), and 394–467 (CRRR…RKGK). Pro residues predominate over residues 30-47 (GGPPTPRPLLPTRPPASP). Lys-79 carries the N6-acetyllysine modification. The span at 166 to 178 (SFFSSPSLANSIR) shows a compositional bias: polar residues. Basic and acidic residues predominate over residues 179 to 194 (SPEERATPHAKSERPS). Residues 216–225 (PGATAAATGL) show a composition bias toward low complexity. Ser-268 bears the Phosphoserine mark. A compositionally biased stretch (low complexity) spans 273-285 (PQLLDPQPRFLDP). The segment at residues 396 to 408 (RRKAGRGRKADAG) is a DNA-binding region (a.T hook 1). A compositionally biased stretch (pro residues) spans 428–446 (EPPPPPPPPPPALPGPGPV). A DNA-binding region (a.T hook 2) is located at residues 544–556 (KRKRGRPPKNLLL). The segment at 581-607 (MPEVKKRRRRKQKLASPQPSYAADAND) is disordered. Position 596 is a phosphoserine (Ser-596). Residue Lys-609 forms a Glycyl lysine isopeptide (Lys-Gly) (interchain with G-Cter in SUMO2) linkage. Disordered regions lie at residues 717 to 792 (LTEL…RNCG) and 806 to 827 (LESG…GQTE). Positions 737–746 (KPKRKRRSRK) are enriched in basic residues. Residues 816–827 (YYSTGAPSGQTE) show a composition bias toward polar residues. 2 positions are modified to phosphoserine: Ser-829 and Ser-846. Omega-N-methylarginine is present on Arg-891. 2 positions are modified to phosphoserine: Ser-896 and Ser-1064. Disordered regions lie at residues 1159–1198 (VSET…QSSL) and 1253–1286 (ASAA…KKER). Composition is skewed to low complexity over residues 1160–1171 (SETFSESSSDST) and 1187–1198 (SEASSSEGQSSL). Residue Ser-1187 is modified to Phosphoserine. Phosphoserine is present on residues Ser-1322, Ser-1324, and Ser-1399. Thr-1401 bears the Phosphothreonine mark. Ser-1403 is subject to Phosphoserine. Lys-1409 is covalently cross-linked (Glycyl lysine isopeptide (Lys-Gly) (interchain with G-Cter in SUMO2)). Positions 1503-1533 (PHLASPPATPKADKEPLEMARPPGPPRGPAA) are disordered. Residues Ser-1507 and Ser-1549 each carry the phosphoserine modification.

It is found in the nucleus. Its subcellular location is the chromosome. In terms of biological role, transcription factor required for the proper patterning of the epidermis, which plays a key role in early epithelial morphogenesis. Directly binds promoter and enhancer regions and acts by maintaining local enhancer-promoter chromatin architecture. Interacts with many sequence-specific zinc-finger transcription factors and methyl-CpG-binding proteins to regulate the expression of mesoderm genes that wire surface ectoderm stratification. In Homo sapiens (Human), this protein is Transcription factor Gibbin.